A 138-amino-acid chain; its full sequence is Vesicle transport protein GOT1B (138 aa).

Met-1 is subject to N-acetylmethionine. The Cytoplasmic portion of the chain corresponds to 1-9 (MISLTDTQK). Residues 10–30 (IGMGLTGFGVFFLFFGMILFF) traverse the membrane as a helical segment. The Lumenal portion of the chain corresponds to 31 to 32 (DK). A helical membrane pass occupies residues 33-53 (ALLAIGNVLFVAGLAFVIGLE). The Cytoplasmic portion of the chain corresponds to 54-68 (RTFRFFFQRHKVKAT). A topological domain (lumenal) is located at residue Glu-90. Residues 91 to 109 (IYGFFLLFRGFFPVVVGFI) traverse the membrane as a helical segment. Topologically, residues 110-138 (RRVPVLGSLLNLPGIRSFVDKVGESNNMV) are cytoplasmic.

The protein belongs to the GOT1 family.

The protein resides in the golgi apparatus membrane. Its function is as follows. May be involved in fusion of ER-derived transport vesicles with the Golgi complex. The polypeptide is Vesicle transport protein GOT1B (Golt1b) (Mus musculus (Mouse)).